We begin with the raw amino-acid sequence, 340 residues long: GTPase Obg (340 aa).

The Obg domain maps to 1-158; sequence MSFIDEAKVY…KYITLKLKII (158 aa). The region spanning 159-325 is the OBG-type G domain; sequence SDIGIIGLPN…LSTLIQYIHK (167 aa). GTP is bound by residues 165 to 172, 190 to 194, 211 to 214, 278 to 281, and 306 to 308; these read GLPNAGKS, FTTLE, DIPG, NKSD, and SSI. Ser-172 and Thr-192 together coordinate Mg(2+).

This sequence belongs to the TRAFAC class OBG-HflX-like GTPase superfamily. OBG GTPase family. In terms of assembly, monomer. Requires Mg(2+) as cofactor.

Its subcellular location is the cytoplasm. An essential GTPase which binds GTP, GDP and possibly (p)ppGpp with moderate affinity, with high nucleotide exchange rates and a fairly low GTP hydrolysis rate. Plays a role in control of the cell cycle, stress response, ribosome biogenesis and in those bacteria that undergo differentiation, in morphogenesis control. In Ehrlichia chaffeensis (strain ATCC CRL-10679 / Arkansas), this protein is GTPase Obg.